The chain runs to 258 residues: Thiazole synthase 1 (258 aa).

The Schiff-base intermediate with DXP role is filled by Lys97. Residues Gly158, 184 to 185, and 206 to 207 each bind 1-deoxy-D-xylulose 5-phosphate; these read AG and NT.

This sequence belongs to the ThiG family. In terms of assembly, homotetramer. Forms heterodimers with either ThiH or ThiS.

The protein resides in the cytoplasm. It carries out the reaction [ThiS sulfur-carrier protein]-C-terminal-Gly-aminoethanethioate + 2-iminoacetate + 1-deoxy-D-xylulose 5-phosphate = [ThiS sulfur-carrier protein]-C-terminal Gly-Gly + 2-[(2R,5Z)-2-carboxy-4-methylthiazol-5(2H)-ylidene]ethyl phosphate + 2 H2O + H(+). It participates in cofactor biosynthesis; thiamine diphosphate biosynthesis. In terms of biological role, catalyzes the rearrangement of 1-deoxy-D-xylulose 5-phosphate (DXP) to produce the thiazole phosphate moiety of thiamine. Sulfur is provided by the thiocarboxylate moiety of the carrier protein ThiS. In vitro, sulfur can be provided by H(2)S. The sequence is that of Thiazole synthase 1 from Syntrophotalea carbinolica (strain DSM 2380 / NBRC 103641 / GraBd1) (Pelobacter carbinolicus).